The chain runs to 557 residues: Aerobic glycerol-3-phosphate dehydrogenase (557 aa).

21–49 (DVVIIGGGITGAGIALDASQRGMKVALVE) is an FAD binding site.

The protein belongs to the FAD-dependent glycerol-3-phosphate dehydrogenase family. The cofactor is FAD.

It is found in the cytoplasm. It catalyses the reaction a quinone + sn-glycerol 3-phosphate = dihydroxyacetone phosphate + a quinol. It functions in the pathway polyol metabolism; glycerol degradation via glycerol kinase pathway; glycerone phosphate from sn-glycerol 3-phosphate (aerobic route): step 1/1. The chain is Aerobic glycerol-3-phosphate dehydrogenase (glpD) from Staphylococcus haemolyticus (strain JCSC1435).